The chain runs to 491 residues: Cyclin-A1-3 (491 aa).

The segment covering 1–21 (MSSSLASRRSSSSSAAKRPAA) has biased composition (low complexity). 2 disordered regions span residues 1–32 (MSSSLASRRSSSSSAAKRPAAGEGGGKAAAGA) and 69–106 (SLASGRNVGTNRVSAVKSASTKPASAISRHESAPQKES). The segment covering 75 to 91 (NVGTNRVSAVKSASTKP) has biased composition (polar residues).

The protein belongs to the cyclin family. Cyclin AB subfamily.

The sequence is that of Cyclin-A1-3 (CYCA1-3) from Oryza sativa subsp. japonica (Rice).